A 224-amino-acid polypeptide reads, in one-letter code: RNA-free ribonuclease P (224 aa).

The protein belongs to the HARP family.

It catalyses the reaction Endonucleolytic cleavage of RNA, removing 5'-extranucleotides from tRNA precursor.. Functionally, RNA-free RNase P that catalyzes the removal of the 5'-leader sequence from pre-tRNA to produce the mature 5'-terminus. This is RNA-free ribonuclease P from Haloarcula marismortui (strain ATCC 43049 / DSM 3752 / JCM 8966 / VKM B-1809) (Halobacterium marismortui).